A 291-amino-acid chain; its full sequence is Probable L-ascorbate peroxidase 3, peroxisomal (291 aa).

His41 serves as the catalytic Proton acceptor. The tract at residues 114-133 (YVPGRRDSSDSPEEGRLPDA) is disordered. Basic and acidic residues predominate over residues 116-133 (PGRRDSSDSPEEGRLPDA). His161 provides a ligand contact to heme b. K(+)-binding residues include Thr162, Thr178, and Asp185. Residues 263–283 (LLMQTAAGVAVAAAVVAWAYL) traverse the membrane as a helical segment.

The protein belongs to the peroxidase family. Ascorbate peroxidase subfamily. It depends on heme b as a cofactor. As to expression, expressed in stems.

Its subcellular location is the peroxisome membrane. It carries out the reaction L-ascorbate + H2O2 = L-dehydroascorbate + 2 H2O. Its function is as follows. Plays a key role in hydrogen peroxide removal. The sequence is that of Probable L-ascorbate peroxidase 3, peroxisomal from Oryza sativa subsp. japonica (Rice).